We begin with the raw amino-acid sequence, 366 residues long: Septin-1 (366 aa).

In terms of domain architecture, Septin-type G spans 22-295 (KGFDFTLMVA…EGYRARCLQS (274 aa)). The tract at residues 32–39 (GESGLGKS) is G1 motif. Residues 32–39 (GESGLGKS), Thr66, Gly92, and 171–179 (KADALMPRE) contribute to the GTP site. The tract at residues 89–92 (DTPG) is G3 motif. Residues 170–173 (GKAD) are G4 motif. At Ser206 the chain carries Phosphoserine. GTP is bound by residues Gly229 and Arg244. Phosphoserine is present on Ser247. Thr250 is modified (phosphothreonine). A phosphoserine; by AURKB mark is found at Ser306 and Ser314. Residues 347–366 (EKMQAQMQQSQAQGEQSDVL) form a disordered region. The segment covering 349–366 (MQAQMQQSQAQGEQSDVL) has biased composition (low complexity).

The protein belongs to the TRAFAC class TrmE-Era-EngA-EngB-Septin-like GTPase superfamily. Septin GTPase family. As to quaternary structure, septins polymerize into heterooligomeric protein complexes that form filaments, and can associate with cellular membranes, actin filaments and microtubules. GTPase activity is required for filament formation. Interacts with AURKB.

The protein localises to the cytoplasm. Its subcellular location is the cytoskeleton. The protein resides in the microtubule organizing center. It is found in the centrosome. It localises to the midbody. In terms of biological role, filament-forming cytoskeletal GTPase. May play a role in cytokinesis (Potential). This chain is Septin-1, found in Mus musculus (Mouse).